The chain runs to 356 residues: Deoxyribonuclease-2-beta (356 aa).

A signal peptide spans 1–22 (MTAQPLKAALPLLFVALSGVLG). 4 N-linked (GlcNAc...) asparagine glycosylation sites follow: N77, N98, N114, and N273.

This sequence belongs to the DNase II family. Liver specific.

It localises to the lysosome. The catalysed reaction is Endonucleolytic cleavage to nucleoside 3'-phosphates and 3'-phosphooligonucleotide end-products.. Functionally, hydrolyzes DNA under acidic conditions. Does not require divalent cations for activity. Participates in the degradation of nuclear DNA during lens cell differentiation. The polypeptide is Deoxyribonuclease-2-beta (Dnase2b) (Rattus norvegicus (Rat)).